The chain runs to 97 residues: Nucleoid-associated protein HPAG1_0033 (97 aa).

It belongs to the YbaB/EbfC family. In terms of assembly, homodimer.

The protein resides in the cytoplasm. Its subcellular location is the nucleoid. Functionally, binds to DNA and alters its conformation. May be involved in regulation of gene expression, nucleoid organization and DNA protection. The polypeptide is Nucleoid-associated protein HPAG1_0033 (Helicobacter pylori (strain HPAG1)).